A 268-amino-acid polypeptide reads, in one-letter code: MAKVPDLFEDLKNCYSENEDYSSEIDHLSLNQKSFYDASYGPLREDHMNKFMSLDTSETSKTSRLSFKENVVMVTANGKILKKRRLSLNQFITDDDLEAIANDTEEEIIKPRSAHYSFQSNVKYNFMRVIHQECILNDALNQSIIRDMSGPYLMAATLNNLEEAVKFDMVAYVSEEDSQLPVTLRISKTQLFVSAQNEDEPVLLKEMPETPKIIKDETNLLFFWEKHGSMDYFKSVAHPKLFIATKQEKLVHMASGPPSITDFQILEK.

Positions 1-112 are excised as a propeptide; the sequence is MAKVPDLFED…DTEEEIIKPR (112 aa). N6-acetyllysine is present on K82. Positions 82–86 are nuclear localization signal (NLS); the sequence is KKRRL. Phosphoserine is present on S87. Residues N102 and N141 are each glycosylated (N-linked (GlcNAc...) asparagine).

It belongs to the IL-1 family. As to quaternary structure, monomer. Interacts with TMED10; the interaction mediates the translocation from the cytoplasm into the ERGIC (endoplasmic reticulum-Golgi intermediate compartment) and thereby secretion. Interacts with IL1R1. Interacts with S100A13; this interaction is the first step in the export of IL1A, followed by direct translocation of this complex across the plasma membrane. Acetylated within its nuclear localization sequence, which impacts subcellular localization. Post-translationally, proteolytic processed by CAPN1 in a calcium-dependent manner. Cleavage from 31 kDa precursor to 18 kDa biologically active molecules. In terms of processing, phosphorylated. Phosphorylation greatly enhances susceptibility to digestion and promotes the conversion of pre-IL1A alpha to the biologically active IL1A.

It is found in the nucleus. Its subcellular location is the cytoplasm. The protein localises to the secreted. Its function is as follows. Cytokine constitutively present intracellularly in nearly all resting non-hematopoietic cells that plays an important role in inflammation and bridges the innate and adaptive immune systems. After binding to its receptor IL1R1 together with its accessory protein IL1RAP, forms the high affinity interleukin-1 receptor complex. Signaling involves the recruitment of adapter molecules such as MYD88, IRAK1 or IRAK4. In turn, mediates the activation of NF-kappa-B and the three MAPK pathways p38, p42/p44 and JNK pathways. Within the cell, acts as an alarmin and cell death results in its liberation in the extracellular space after disruption of the cell membrane to induce inflammation and alert the host to injury or damage. In addition to its role as a danger signal, which occurs when the cytokine is passively released by cell necrosis, directly senses DNA damage and acts as signal for genotoxic stress without loss of cell integrity. The chain is Interleukin-1 alpha (IL1A) from Capra hircus (Goat).